Consider the following 506-residue polypeptide: Maturase K (506 aa).

This sequence belongs to the intron maturase 2 family. MatK subfamily.

Its subcellular location is the plastid. The protein localises to the chloroplast. In terms of biological role, usually encoded in the trnK tRNA gene intron. Probably assists in splicing its own and other chloroplast group II introns. The chain is Maturase K from Trifolium incarnatum (Crimson clover).